The following is a 295-amino-acid chain: 4-diphosphocytidyl-2-C-methyl-D-erythritol kinase (295 aa).

Lys-10 is a catalytic residue. Residue 97 to 107 (PIGSGLGGASS) coordinates ATP. Asp-139 is an active-site residue.

The protein belongs to the GHMP kinase family. IspE subfamily. Homodimer.

It carries out the reaction 4-CDP-2-C-methyl-D-erythritol + ATP = 4-CDP-2-C-methyl-D-erythritol 2-phosphate + ADP + H(+). Its pathway is isoprenoid biosynthesis; isopentenyl diphosphate biosynthesis via DXP pathway; isopentenyl diphosphate from 1-deoxy-D-xylulose 5-phosphate: step 3/6. Catalyzes the phosphorylation of the position 2 hydroxy group of 4-diphosphocytidyl-2C-methyl-D-erythritol. This chain is 4-diphosphocytidyl-2-C-methyl-D-erythritol kinase, found in Blochmanniella pennsylvanica (strain BPEN).